The chain runs to 317 residues: Probable cell division protein WhiA (317 aa).

The H-T-H motif DNA-binding region spans 275–308; the sequence is SLKELGEMLVPKVGKSGVNHRMRKIDELAEKLEE.

Belongs to the WhiA family.

Functionally, involved in cell division and chromosome segregation. In Desulfitobacterium hafniense (strain DSM 10664 / DCB-2), this protein is Probable cell division protein WhiA.